Reading from the N-terminus, the 512-residue chain is GMP synthase [glutamine-hydrolyzing] (512 aa).

The region spanning 7-197 is the Glutamine amidotransferase type-1 domain; it reads LVLVVDFGGQ…LFKVAGLKAD (191 aa). Cys84 serves as the catalytic Nucleophile. Residues His171 and Glu173 contribute to the active site. The region spanning 198 to 387 is the GMPS ATP-PPase domain; that stretch reads WSMASFAEEK…LGIPHKLVWR (190 aa). An ATP-binding site is contributed by 225 to 231; that stretch reads SGGVDSS.

In terms of assembly, homodimer.

The enzyme catalyses XMP + L-glutamine + ATP + H2O = GMP + L-glutamate + AMP + diphosphate + 2 H(+). It functions in the pathway purine metabolism; GMP biosynthesis; GMP from XMP (L-Gln route): step 1/1. Its function is as follows. Catalyzes the synthesis of GMP from XMP. This chain is GMP synthase [glutamine-hydrolyzing], found in Clostridium novyi (strain NT).